A 423-amino-acid polypeptide reads, in one-letter code: UDP-N-acetylglucosamine 1-carboxyvinyltransferase 2 (423 aa).

Position 23–24 (23–24 (KN)) interacts with phosphoenolpyruvate. Arg95 is a binding site for UDP-N-acetyl-alpha-D-glucosamine. Catalysis depends on Cys119, which acts as the Proton donor. The residue at position 119 (Cys119) is a 2-(S-cysteinyl)pyruvic acid O-phosphothioketal. UDP-N-acetyl-alpha-D-glucosamine contacts are provided by Asp306 and Ile328.

Belongs to the EPSP synthase family. MurA subfamily.

It is found in the cytoplasm. The enzyme catalyses phosphoenolpyruvate + UDP-N-acetyl-alpha-D-glucosamine = UDP-N-acetyl-3-O-(1-carboxyvinyl)-alpha-D-glucosamine + phosphate. Its pathway is cell wall biogenesis; peptidoglycan biosynthesis. Functionally, cell wall formation. Adds enolpyruvyl to UDP-N-acetylglucosamine. The protein is UDP-N-acetylglucosamine 1-carboxyvinyltransferase 2 of Symbiobacterium thermophilum (strain DSM 24528 / JCM 14929 / IAM 14863 / T).